The sequence spans 173 residues: Crossover junction endodeoxyribonuclease RuvC (173 aa).

Catalysis depends on residues D8, E67, and D139. Residues D8, E67, and D139 each contribute to the Mg(2+) site.

This sequence belongs to the RuvC family. As to quaternary structure, homodimer which binds Holliday junction (HJ) DNA. The HJ becomes 2-fold symmetrical on binding to RuvC with unstacked arms; it has a different conformation from HJ DNA in complex with RuvA. In the full resolvosome a probable DNA-RuvA(4)-RuvB(12)-RuvC(2) complex forms which resolves the HJ. Mg(2+) is required as a cofactor.

The protein resides in the cytoplasm. It carries out the reaction Endonucleolytic cleavage at a junction such as a reciprocal single-stranded crossover between two homologous DNA duplexes (Holliday junction).. The RuvA-RuvB-RuvC complex processes Holliday junction (HJ) DNA during genetic recombination and DNA repair. Endonuclease that resolves HJ intermediates. Cleaves cruciform DNA by making single-stranded nicks across the HJ at symmetrical positions within the homologous arms, yielding a 5'-phosphate and a 3'-hydroxyl group; requires a central core of homology in the junction. The consensus cleavage sequence is 5'-(A/T)TT(C/G)-3'. Cleavage occurs on the 3'-side of the TT dinucleotide at the point of strand exchange. HJ branch migration catalyzed by RuvA-RuvB allows RuvC to scan DNA until it finds its consensus sequence, where it cleaves and resolves the cruciform DNA. The polypeptide is Crossover junction endodeoxyribonuclease RuvC (Edwardsiella ictaluri (strain 93-146)).